The following is a 389-amino-acid chain: Coproporphyrin III ferrochelatase (389 aa).

Residues Ser70 and Tyr139 each contribute to the Fe-coproporphyrin III site. His205 is a binding site for Fe(2+). A disordered region spans residues 207 to 229 (IPSTDAGKSGPSGRPDSGEPWGE). Glu303 contributes to the Fe(2+) binding site.

The protein belongs to the ferrochelatase family.

Its subcellular location is the cytoplasm. The enzyme catalyses Fe-coproporphyrin III + 2 H(+) = coproporphyrin III + Fe(2+). It participates in porphyrin-containing compound metabolism; protoheme biosynthesis. Functionally, involved in coproporphyrin-dependent heme b biosynthesis. Catalyzes the insertion of ferrous iron into coproporphyrin III to form Fe-coproporphyrin III. The sequence is that of Coproporphyrin III ferrochelatase from Leifsonia xyli subsp. xyli (strain CTCB07).